The following is a 170-amino-acid chain: Peptide deformylase (170 aa).

Residues Cys-91 and His-133 each contribute to the Fe cation site. The active site involves Glu-134. Position 137 (His-137) interacts with Fe cation.

This sequence belongs to the polypeptide deformylase family. Fe(2+) serves as cofactor.

The enzyme catalyses N-terminal N-formyl-L-methionyl-[peptide] + H2O = N-terminal L-methionyl-[peptide] + formate. Removes the formyl group from the N-terminal Met of newly synthesized proteins. Requires at least a dipeptide for an efficient rate of reaction. N-terminal L-methionine is a prerequisite for activity but the enzyme has broad specificity at other positions. The polypeptide is Peptide deformylase (Glaesserella parasuis serovar 5 (strain SH0165) (Haemophilus parasuis)).